Consider the following 204-residue polypeptide: Putative peroxiredoxin ycf42 (204 aa).

The Thioredoxin domain occupies 5 to 163 (PKIGKTPPNF…LLRILESIQY (159 aa)).

This sequence belongs to the peroxiredoxin family. AhpC/Prx1 subfamily.

Its subcellular location is the plastid. It localises to the chloroplast. The catalysed reaction is a hydroperoxide + [protein]-dithiol = [protein]-disulfide + an alcohol + H2O. This is Putative peroxiredoxin ycf42 (ycf42) from Trieres chinensis (Marine centric diatom).